Here is an 87-residue protein sequence, read N- to C-terminus: Mu-theraphotoxin-Hs1a (87 aa).

The first 24 residues, 1–24 (MVNMKASMFLTFAGLVLLFVVCYA), serve as a signal peptide directing secretion. The propeptide occupies 25-52 (SESEEKEFPKEMLSSIFAVDNDFKQEER). 3 disulfide bridges follow: cysteine 54–cysteine 67, cysteine 61–cysteine 72, and cysteine 66–cysteine 79.

The protein belongs to the neurotoxin 10 (Hwtx-1) family. 51 (Hntx-8) subfamily. Hntx-8 sub-subfamily. In terms of tissue distribution, expressed by the venom gland.

It localises to the secreted. In terms of biological role, probable sodium channel pore blocker that dose-dependently inhibits voltage-gated sodium channels (VGSC) on DUM neurons in a way similar to tetrodotoxin. Has no effect on the kinetics of activation and inactivation. Seems not to interact with VGSC in an inactivated state. In vivo, reversibly paralyzes cockroaches, and can enhance the muscular contraction elicited by stimulating its nerve. The protein is Mu-theraphotoxin-Hs1a of Cyriopagopus schmidti (Chinese bird spider).